The chain runs to 203 residues: ATP-dependent Clp protease proteolytic subunit 1 (203 aa).

Residue Ser-98 is the Nucleophile of the active site. His-123 is an active-site residue.

It belongs to the peptidase S14 family. Fourteen ClpP subunits assemble into 2 heptameric rings which stack back to back to give a disk-like structure with a central cavity, resembling the structure of eukaryotic proteasomes.

The protein resides in the cytoplasm. The catalysed reaction is Hydrolysis of proteins to small peptides in the presence of ATP and magnesium. alpha-casein is the usual test substrate. In the absence of ATP, only oligopeptides shorter than five residues are hydrolyzed (such as succinyl-Leu-Tyr-|-NHMec, and Leu-Tyr-Leu-|-Tyr-Trp, in which cleavage of the -Tyr-|-Leu- and -Tyr-|-Trp bonds also occurs).. Functionally, cleaves peptides in various proteins in a process that requires ATP hydrolysis. Has a chymotrypsin-like activity. Plays a major role in the degradation of misfolded proteins. This Chlamydia felis (strain Fe/C-56) (Chlamydophila felis) protein is ATP-dependent Clp protease proteolytic subunit 1.